The primary structure comprises 210 residues: Late histone H1 (210 aa).

2 disordered regions span residues M1–T21 and S86–K210. One can recognise an H15 domain in the interval A17–K91. Over residues A104 to A113 the composition is skewed to basic residues. Residues K114–A123 show a composition bias toward basic and acidic residues. The span at A124–K210 shows a compositional bias: basic residues.

The protein belongs to the histone H1/H5 family.

It localises to the nucleus. It is found in the chromosome. Functionally, histones H1 are necessary for the condensation of nucleosome chains into higher-order structures. The sequence is that of Late histone H1 from Lytechinus pictus (Painted sea urchin).